A 798-amino-acid polypeptide reads, in one-letter code: Vacuolar protein sorting-associated protein 53 homolog (798 aa).

Belongs to the VPS53 family. Component of the Golgi-associated retrograde protein (GARP) complex, also called VFT (VPS fifty-three) complex, composed of vps-51, vps-52, vps-53 and vps-54. Within the complex interacts with vps-51, vps-52 and vps-54. Ubiquitously expressed, with particularly strong expression in neuronal cells. Specifically expressed in head and tail neurons and in the pharynx and ventral cord motor neurons.

The protein localises to the golgi apparatus. The protein resides in the trans-Golgi network membrane. It is found in the endosome membrane. It localises to the perikaryon. Its subcellular location is the cytoplasm. The protein localises to the perinuclear region. Acts as a component of the GARP complex that is involved in retrograde transport from early and late endosomes to the trans-Golgi network (TGN). The GARP complex facilitates tethering as well as SNARE complex assembly at the Golgi. Plays a role in the trafficking of cargo to dense-core vesicles, probably through association with the EARP-interacting protein eipr-1. Important for neuronal function. This is Vacuolar protein sorting-associated protein 53 homolog from Caenorhabditis elegans.